Here is a 244-residue protein sequence, read N- to C-terminus: Membrane-spanning 4-domains subfamily A member 6B (244 aa).

The Cytoplasmic segment spans residues 1-46 (MIPQVVTSETVAMISPNGMSLPQTDKPQPFHQWQDSLKKHLKAEIK). Residues 47 to 67 (VMAAIQIMCAVMVLSLGIILA) traverse the membrane as a helical segment. Over 68–84 (SVPSNLHFTSVFSVLLK) the chain is Extracellular. The helical transmembrane segment at 85-105 (SGYPFIGALFFIVSGILSIVT) threads the bilayer. Residues 106-121 (ETKSTKILVDSSLTLN) lie on the Cytoplasmic side of the membrane. The helical transmembrane segment at 122 to 142 (ILSVSFAFMGIIIISVSLAGL) threads the bilayer. Topologically, residues 143-176 (HPASEQCLQSKELRPTEYHYYQFLDRNECFAAKS) are extracellular. A helical transmembrane segment spans residues 177-197 (VLAGVFSLMLISTMLELGLAV). Topologically, residues 198 to 244 (LTAMLWWKQSHSNIPGNVMFLPHSSNNDSNMESKVLCNPSYEEQLVC) are cytoplasmic.

This sequence belongs to the MS4A family. Expressed at high levels in thymus, spleen, and peripheral lymph nodes, with less abundant levels in non-lymphoid tissues.

It is found in the membrane. In terms of biological role, may be involved in signal transduction as a component of a multimeric receptor complex. The protein is Membrane-spanning 4-domains subfamily A member 6B (Ms4a6b) of Mus musculus (Mouse).